The chain runs to 443 residues: Probable glycine dehydrogenase (decarboxylating) subunit 1 (443 aa).

This sequence belongs to the GcvP family. N-terminal subunit subfamily. In terms of assembly, the glycine cleavage system is composed of four proteins: P, T, L and H. In this organism, the P 'protein' is a heterodimer of two subunits.

The catalysed reaction is N(6)-[(R)-lipoyl]-L-lysyl-[glycine-cleavage complex H protein] + glycine + H(+) = N(6)-[(R)-S(8)-aminomethyldihydrolipoyl]-L-lysyl-[glycine-cleavage complex H protein] + CO2. The glycine cleavage system catalyzes the degradation of glycine. The P protein binds the alpha-amino group of glycine through its pyridoxal phosphate cofactor; CO(2) is released and the remaining methylamine moiety is then transferred to the lipoamide cofactor of the H protein. The polypeptide is Probable glycine dehydrogenase (decarboxylating) subunit 1 (Nitratidesulfovibrio vulgaris (strain DSM 19637 / Miyazaki F) (Desulfovibrio vulgaris)).